We begin with the raw amino-acid sequence, 367 residues long: Calcium uniporter protein, mitochondrial (367 aa).

The N-terminal 12 residues, 1-12 (MAMPRVLCRVRL), are a transit peptide targeting the mitochondrion. Topologically, residues 13–232 (LIHNDFSVIS…LEEKKLELEQ (220 aa)) are mitochondrial matrix. Residues 61-80 (KQDASSSSSDSDSSDSDEDD) form a disordered region. Positions 199–233 (REHQLQKEVELTTQLETLQQELLPLEEKKLELEQV) form a coiled coil. Residues 233–253 (VANRRSNWMAWAGLGLMSVQF) form a helical membrane-spanning segment. The Mitochondrial intermembrane segment spans residues 254–262 (GILARLTWW). Residues 263–284 (EYSWDIMEPVTYFVTYGTAMAA) traverse the membrane as a helical segment. A Selectivity filter motif is present at residues 266–276 (WDIMEPVTYFV). E270 serves as a coordination point for Ca(2+). The Mitochondrial matrix segment spans residues 285-367 (YAYFVLTREE…KKQVEEKAKE (83 aa)).

The protein belongs to the MCU (TC 1.A.77) family. Homotetramer. Component of the uniplex complex, composed of MCU, EMRE, MICU1 and MICU2 in a 4:4:1:1 stoichiometry.

Its subcellular location is the mitochondrion inner membrane. The enzyme catalyses Ca(2+)(in) = Ca(2+)(out). Its activity is regulated as follows. MCU channel activity is regulated by the heterodimer composed of MICU1 and MICU2, which act as calcium-sensors. At low calcium levels, MICU1 occludes the pore of the MCU channel, preventing mitochondrial calcium uptake. At higher calcium levels, calcium-binding to MICU1 and MICU2 induces a conformational change that weakens MCU-MICU1 interactions and moves the MICU1-MICU2 heterodimer away from the pore, allowing calcium permeation through the channel. Functionally, channel-forming and calcium-conducting subunit of the mitochondrial inner membrane calcium uniporter complex (uniplex), which mediates calcium uptake into the mitochondrial matrix. MCU channel activity is regulated by the calcium-sensor subunits of the uniplex MICU1 and MICU2. Mitochondrial calcium homeostasis plays key roles in cellular physiology and regulates ATP production, cytoplasmic calcium signals and activation of cell death pathways. This Tribolium castaneum (Red flour beetle) protein is Calcium uniporter protein, mitochondrial.